The sequence spans 232 residues: Beta-casein (232 aa).

Residues 1–15 form the signal peptide; it reads MKLLILACFVALALA. N-linked (GlcNAc...) asparagine glycosylation occurs at asparagine 22. At serine 24 the chain carries Phosphoserine. The residue at position 27 (threonine 27) is a Phosphothreonine. Phosphoserine is present on residues serine 30, serine 32, serine 33, and serine 34. Over residues 48–63 the composition is skewed to basic and acidic residues; the sequence is KLKREEQQQTENERQN. Positions 48-74 are disordered; that stretch reads KLKREEQQQTENERQNKIHQFPQPQPL.

It belongs to the beta-casein family. As to expression, mammary gland specific. Secreted in milk.

It localises to the secreted. Its function is as follows. Important role in determination of the surface properties of the casein micelles. The sequence is that of Beta-casein (CSN2) from Sus scrofa (Pig).